We begin with the raw amino-acid sequence, 422 residues long: Histidine--tRNA ligase (422 aa).

Belongs to the class-II aminoacyl-tRNA synthetase family. As to quaternary structure, homodimer.

The protein resides in the cytoplasm. The catalysed reaction is tRNA(His) + L-histidine + ATP = L-histidyl-tRNA(His) + AMP + diphosphate + H(+). This is Histidine--tRNA ligase from Prosthecochloris aestuarii (strain DSM 271 / SK 413).